A 609-amino-acid polypeptide reads, in one-letter code: Phosphoenolpyruvate carboxykinase [GTP] (609 aa).

Residues Arg-81 and 220 to 222 (YGG) each bind substrate. Positions 229 and 249 each coordinate Mn(2+). Ser-271 lines the substrate pocket. 272–277 (ACGKTN) provides a ligand contact to GTP. The active site involves Cys-273. A Mn(2+)-binding site is contributed by Asp-296. 387-389 (NSR) is a substrate binding site. Residues Arg-389, Arg-420, and 515–518 (FGEN) contribute to the GTP site.

It belongs to the phosphoenolpyruvate carboxykinase [GTP] family. As to quaternary structure, monomer. Requires Mn(2+) as cofactor.

Its subcellular location is the cytoplasm. The catalysed reaction is oxaloacetate + GTP = phosphoenolpyruvate + GDP + CO2. It functions in the pathway carbohydrate biosynthesis; gluconeogenesis. In terms of biological role, catalyzes the conversion of oxaloacetate (OAA) to phosphoenolpyruvate (PEP), the rate-limiting step in the metabolic pathway that produces glucose from lactate and other precursors derived from the citric acid cycle. This is Phosphoenolpyruvate carboxykinase [GTP] from Mycobacterium ulcerans (strain Agy99).